Here is a 456-residue protein sequence, read N- to C-terminus: Phosphomannomutase (456 aa).

Serine 98 acts as the Phosphoserine intermediate in catalysis. 4 residues coordinate Mg(2+): serine 98, aspartate 245, aspartate 247, and aspartate 249.

It belongs to the phosphohexose mutase family. Mg(2+) is required as a cofactor.

It catalyses the reaction alpha-D-mannose 1-phosphate = D-mannose 6-phosphate. Its pathway is nucleotide-sugar biosynthesis; GDP-alpha-D-mannose biosynthesis; alpha-D-mannose 1-phosphate from D-fructose 6-phosphate: step 2/2. Its function is as follows. Involved in the biosynthesis of the capsular polysaccharide colanic acid. The protein is Phosphomannomutase (manB) of Salmonella typhimurium (strain LT2 / SGSC1412 / ATCC 700720).